The following is a 183-amino-acid chain: Large ribosomal subunit protein uL10 (183 aa).

The protein belongs to the universal ribosomal protein uL10 family. In terms of assembly, part of the ribosomal stalk of the 50S ribosomal subunit. The N-terminus interacts with L11 and the large rRNA to form the base of the stalk. The C-terminus forms an elongated spine to which L12 dimers bind in a sequential fashion forming a multimeric L10(L12)X complex.

Forms part of the ribosomal stalk, playing a central role in the interaction of the ribosome with GTP-bound translation factors. This chain is Large ribosomal subunit protein uL10, found in Mesomycoplasma hyopneumoniae (strain 7448) (Mycoplasma hyopneumoniae).